A 405-amino-acid polypeptide reads, in one-letter code: Aspartokinase (405 aa).

7 to 10 is a binding site for ATP; it reads KYGG. 25 to 30 provides a ligand contact to substrate; that stretch reads RIAHYR. Serine 41 contributes to the ATP binding site. Substrate-binding positions include 47–49, glutamate 74, 125–126, 150–153, and serine 153; these read TDE, LD, and RGGS. Residues 173 to 174, 179 to 184, and arginine 209 contribute to the ATP site; these read TD and YTTDPH. 2 ACT domains span residues 263-342 and 344-405; these read IGLI…IAKV and IVGV…LDKA. Residues aspartate 270, 274–275, 288–290, glutamine 294, 355–356, 369–370, and 376–377 contribute to the substrate site; these read IA, AVD, VP, NI, and SE.

This sequence belongs to the aspartokinase family. Heterotetramer consisting of 2 isoforms Alpha (catalytic and regulation) and of a homodimer of 2 isoforms Beta (regulation and thermostability).

The catalysed reaction is L-aspartate + ATP = 4-phospho-L-aspartate + ADP. The protein operates within amino-acid biosynthesis; L-lysine biosynthesis via DAP pathway; (S)-tetrahydrodipicolinate from L-aspartate: step 1/4. It participates in amino-acid biosynthesis; L-methionine biosynthesis via de novo pathway; L-homoserine from L-aspartate: step 1/3. It functions in the pathway amino-acid biosynthesis; L-threonine biosynthesis; L-threonine from L-aspartate: step 1/5. Its activity is regulated as follows. Inhibited by threonine. Functionally, catalyzes the phosphorylation of the beta-carboxyl group of aspartic acid with ATP to yield 4-phospho-L-aspartate, which is involved in the branched biosynthetic pathway leading to the biosynthesis of amino acids threonine, isoleucine and methionine. The sequence is that of Aspartokinase (ask) from Thermus thermophilus.